We begin with the raw amino-acid sequence, 151 residues long: Differentiation-associated protein 2 (151 aa).

The N-terminal stretch at 1–22 (MKQIIRLITTLLLLSLIGITCA) is a signal peptide.

It localises to the endoplasmic reticulum. It is found in the vacuole. Functionally, has an essential role in the initiation of differentiation. Also required for cAMP signaling. In Dictyostelium discoideum (Social amoeba), this protein is Differentiation-associated protein 2 (dia2).